Here is a 378-residue protein sequence, read N- to C-terminus: Putative glutamate--cysteine ligase 2 (378 aa).

Belongs to the glutamate--cysteine ligase type 2 family. YbdK subfamily.

It carries out the reaction L-cysteine + L-glutamate + ATP = gamma-L-glutamyl-L-cysteine + ADP + phosphate + H(+). Its function is as follows. ATP-dependent carboxylate-amine ligase which exhibits weak glutamate--cysteine ligase activity. The chain is Putative glutamate--cysteine ligase 2 from Pseudomonas paraeruginosa (strain DSM 24068 / PA7) (Pseudomonas aeruginosa (strain PA7)).